A 201-amino-acid polypeptide reads, in one-letter code: ATP-dependent Clp protease proteolytic subunit (201 aa).

The Nucleophile role is filled by serine 97. Histidine 122 is a catalytic residue.

The protein belongs to the peptidase S14 family. Fourteen ClpP subunits assemble into 2 heptameric rings which stack back to back to give a disk-like structure with a central cavity, resembling the structure of eukaryotic proteasomes.

The protein resides in the cytoplasm. It carries out the reaction Hydrolysis of proteins to small peptides in the presence of ATP and magnesium. alpha-casein is the usual test substrate. In the absence of ATP, only oligopeptides shorter than five residues are hydrolyzed (such as succinyl-Leu-Tyr-|-NHMec, and Leu-Tyr-Leu-|-Tyr-Trp, in which cleavage of the -Tyr-|-Leu- and -Tyr-|-Trp bonds also occurs).. Its function is as follows. Cleaves peptides in various proteins in a process that requires ATP hydrolysis. Has a chymotrypsin-like activity. Plays a major role in the degradation of misfolded proteins. The protein is ATP-dependent Clp protease proteolytic subunit of Nitratidesulfovibrio vulgaris (strain ATCC 29579 / DSM 644 / CCUG 34227 / NCIMB 8303 / VKM B-1760 / Hildenborough) (Desulfovibrio vulgaris).